A 561-amino-acid polypeptide reads, in one-letter code: Carbohydrate sulfotransferase 15 (561 aa).

Topologically, residues methionine 1–cysteine 80 are cytoplasmic. The helical; Signal-anchor for type II membrane protein transmembrane segment at serine 81–alanine 101 threads the bilayer. Residues histidine 102–threonine 561 are Lumenal-facing. Position 263–267 (lysine 263–threonine 267) interacts with 3'-phosphoadenylyl sulfate. N-linked (GlcNAc...) asparagine glycosylation is present at asparagine 364. Positions 392 and 400 each coordinate 3'-phosphoadenylyl sulfate.

It belongs to the sulfotransferase 1 family. Homodimer; disulfide-linked (Potential). The relevance of homodimerization is however unsure. May interact with phosphorylated proteins in resting B-cells, including HCK. The cofactor is a divalent metal cation. Glutathione serves as cofactor. Glycosylated.

It is found in the golgi apparatus membrane. It catalyses the reaction dermatan 4'-sulfate + n 3'-phosphoadenylyl sulfate = dermatan 4',6'-bissulfate + n adenosine 3',5'-bisphosphate + n H(+). The enzyme catalyses chondroitin 4'-sulfate + n 3'-phosphoadenylyl sulfate = chondroitin 4',6'-bissulfate + n adenosine 3',5'-bisphosphate + n H(+). With respect to regulation, inhibited by phenyl beta-GalNAc(4,6-SO(4)). Sulfotransferase that transfers sulfate from 3'-phosphoadenosine 5'-phosphosulfate (PAPS) to the C-6 hydroxyl group of the GalNAc 4-sulfate residue of chondroitin sulfate A and forms chondroitin sulfate E containing GlcA-GalNAc(4,6-SO(4)) repeating units. It also transfers sulfate to a unique non-reducing terminal sequence, GalNAc(4SO4)-GlcA(2SO4)-GalNAc(6SO4), to yield a highly sulfated structure similar to the structure found in thrombomodulin chondroitin sulfate. May also act as a B-cell receptor involved in BCR ligation-mediated early activation that mediate regulatory signals key to B-cell development and/or regulation of B-cell-specific RAG expression; however such results are unclear in vivo. This chain is Carbohydrate sulfotransferase 15 (Chst15), found in Rattus norvegicus (Rat).